We begin with the raw amino-acid sequence, 115 residues long: Large ribosomal subunit protein bL20 (115 aa).

The protein belongs to the bacterial ribosomal protein bL20 family.

In terms of biological role, binds directly to 23S ribosomal RNA and is necessary for the in vitro assembly process of the 50S ribosomal subunit. It is not involved in the protein synthesizing functions of that subunit. The protein is Large ribosomal subunit protein bL20 of Chlorobium phaeovibrioides (strain DSM 265 / 1930) (Prosthecochloris vibrioformis (strain DSM 265)).